We begin with the raw amino-acid sequence, 320 residues long: Holliday junction branch migration complex subunit RuvB (320 aa).

A large ATPase domain (RuvB-L) region spans residues M1–Y172. ATP is bound by residues R12, G53, K56, T57, T58, E119–F121, R162, Y172, and R209. Residue T57 coordinates Mg(2+). The small ATPAse domain (RuvB-S) stretch occupies residues T173–E243. The head domain (RuvB-H) stretch occupies residues E246–G320. 2 residues coordinate DNA: R301 and R306.

The protein belongs to the RuvB family. As to quaternary structure, homohexamer. Forms an RuvA(8)-RuvB(12)-Holliday junction (HJ) complex. HJ DNA is sandwiched between 2 RuvA tetramers; dsDNA enters through RuvA and exits via RuvB. An RuvB hexamer assembles on each DNA strand where it exits the tetramer. Each RuvB hexamer is contacted by two RuvA subunits (via domain III) on 2 adjacent RuvB subunits; this complex drives branch migration. In the full resolvosome a probable DNA-RuvA(4)-RuvB(12)-RuvC(2) complex forms which resolves the HJ.

It is found in the cytoplasm. The catalysed reaction is ATP + H2O = ADP + phosphate + H(+). Its function is as follows. The RuvA-RuvB-RuvC complex processes Holliday junction (HJ) DNA during genetic recombination and DNA repair, while the RuvA-RuvB complex plays an important role in the rescue of blocked DNA replication forks via replication fork reversal (RFR). RuvA specifically binds to HJ cruciform DNA, conferring on it an open structure. The RuvB hexamer acts as an ATP-dependent pump, pulling dsDNA into and through the RuvAB complex. RuvB forms 2 homohexamers on either side of HJ DNA bound by 1 or 2 RuvA tetramers; 4 subunits per hexamer contact DNA at a time. Coordinated motions by a converter formed by DNA-disengaged RuvB subunits stimulates ATP hydrolysis and nucleotide exchange. Immobilization of the converter enables RuvB to convert the ATP-contained energy into a lever motion, pulling 2 nucleotides of DNA out of the RuvA tetramer per ATP hydrolyzed, thus driving DNA branch migration. The RuvB motors rotate together with the DNA substrate, which together with the progressing nucleotide cycle form the mechanistic basis for DNA recombination by continuous HJ branch migration. Branch migration allows RuvC to scan DNA until it finds its consensus sequence, where it cleaves and resolves cruciform DNA. This Nitratidesulfovibrio vulgaris (strain ATCC 29579 / DSM 644 / CCUG 34227 / NCIMB 8303 / VKM B-1760 / Hildenborough) (Desulfovibrio vulgaris) protein is Holliday junction branch migration complex subunit RuvB.